A 48-amino-acid polypeptide reads, in one-letter code: GTKRVVVVGGGFGGASTAKYLRKLDPSISVTLVEPKTAFVTCPFSNAV.

Position 40 to 46 (40 to 46 (VTCPFSN)) interacts with FAD.

In terms of assembly, dimer of one cytochrome and one flavoprotein.

It is found in the periplasm. It carries out the reaction hydrogen sulfide + 2 Fe(III)-[cytochrome c] = sulfur + 2 Fe(II)-[cytochrome c] + H(+). This Chlorobaculum thiosulfatiphilum (Chlorobium limicola f.sp. thiosulfatophilum) protein is Sulfide dehydrogenase [flavocytochrome c] flavoprotein chain.